Reading from the N-terminus, the 145-residue chain is UPF0102 protein BAV3162 (145 aa).

Belongs to the UPF0102 family.

This chain is UPF0102 protein BAV3162, found in Bordetella avium (strain 197N).